Reading from the N-terminus, the 795-residue chain is RalBP1-associated Eps domain-containing protein 1 (795 aa).

The 104-residue stretch at 10–113 folds into the EH 1 domain; it reads EQKYYSDLFS…SKNEQESRLA (104 aa). The interval 112-238 is disordered; it reads LAASYSSDSE…NWVSFADTPP (127 aa). Polar residues predominate over residues 115–126; that stretch reads SYSSDSENQGSY. Residues serine 145, serine 162, serine 166, and serine 170 each carry the phosphoserine modification. Positions 156-168 are enriched in low complexity; it reads EQQEPVSPVVSPQ. Threonine 173 bears the Phosphothreonine mark. Positions 205–216 are enriched in low complexity; that stretch reads GDAQAGSSAGDA. Phosphoserine is present on residues serine 272 and serine 273. Residues 285–374 form the EH 2 domain; that stretch reads QRQYYVNQFK…ESLMPKLIDL (90 aa). The residue at position 288 (tyrosine 288) is a Phosphotyrosine. Serine 307 carries the phosphoserine modification. One can recognise an EF-hand domain in the interval 318 to 353; the sequence is LPILELSHIWELSDFDKDGALTLDEFCAAFHLVVAR. Positions 331, 333, 335, and 342 each coordinate Ca(2+). Disordered regions lie at residues 380 to 433 and 469 to 720; these read VGEQ…SSQT and ELKR…DEHT. The segment covering 407 to 433 has biased composition (polar residues); that stretch reads LNQTWPELNQSSEQWETFSERSSSSQT. Residues serine 475, serine 482, and serine 489 each carry the phosphoserine modification. Polar residues-rich tracts occupy residues 497–518 and 525–542; these read INSS…SDSF and IGSS…SPDN. Position 539 is a phosphoserine (serine 539). Threonine 543 carries the post-translational modification Phosphothreonine. The span at 543-553 shows a compositional bias: pro residues; it reads TAPPPPPPRPQ. Serine 561 is subject to Phosphoserine. The span at 562–573 shows a compositional bias: polar residues; sequence LDMNRTFAVTTG. Positions 574-583 are enriched in low complexity; sequence QQQAGVVAHP. Over residues 584–595 the composition is skewed to pro residues; it reads PAVPPRPQPSQA. Composition is skewed to polar residues over residues 611–622 and 681–692; these read THTSTSPQQIPE and ATNVPANVSKGT. The interaction with RALBP1 stretch occupies residues 651–795; the sequence is HPEVLPAEKA…LEQLRPFSHL (145 aa). Residues 707–720 show a composition bias toward basic and acidic residues; the sequence is KSEDELRPDVDEHT. Phosphoserine is present on residues serine 708 and serine 739. Residues 750-790 adopt a coiled-coil conformation; it reads SIRRNKETNTVLARLNSELQQQLKDVLEERISLEVQLEQLR.

In terms of assembly, homodimer (Potential). Interacts with RALBP1, CRK and GRB2. Binding to RALBP1 does not affect its Ral-binding activity. Forms a complex with the SH3 domains of CRK and GRB2 which may link it to an EGF-responsive tyrosine kinase. Interacts with RAB11FIP2. Interacts with AMPH, ITSN1 (via SH3 domains) and SGIP1; may be involved in clathrin-mediated endocytosis. Post-translationally, EGF stimulates phosphorylation on Tyr-residues. Expressed in all tissues examined. The highest level expression was found in the kidney and testis.

It is found in the membrane. The protein localises to the clathrin-coated pit. Functionally, may coordinate the cellular actions of activated EGF receptors and Ral-GTPases. In Mus musculus (Mouse), this protein is RalBP1-associated Eps domain-containing protein 1 (Reps1).